A 924-amino-acid chain; its full sequence is Isoleucine--tRNA ligase (924 aa).

The 'HIGH' region motif lies at Pro-58–His-68. Residue Glu-561 participates in L-isoleucyl-5'-AMP binding. Residues Lys-602 to Ser-606 carry the 'KMSKS' region motif. Lys-605 is a binding site for ATP. 4 residues coordinate Zn(2+): Cys-887, Cys-890, Cys-907, and Cys-910.

It belongs to the class-I aminoacyl-tRNA synthetase family. IleS type 1 subfamily. In terms of assembly, monomer. Zn(2+) is required as a cofactor.

The protein localises to the cytoplasm. The catalysed reaction is tRNA(Ile) + L-isoleucine + ATP = L-isoleucyl-tRNA(Ile) + AMP + diphosphate. Catalyzes the attachment of isoleucine to tRNA(Ile). As IleRS can inadvertently accommodate and process structurally similar amino acids such as valine, to avoid such errors it has two additional distinct tRNA(Ile)-dependent editing activities. One activity is designated as 'pretransfer' editing and involves the hydrolysis of activated Val-AMP. The other activity is designated 'posttransfer' editing and involves deacylation of mischarged Val-tRNA(Ile). This Dichelobacter nodosus (strain VCS1703A) protein is Isoleucine--tRNA ligase.